A 946-amino-acid chain; its full sequence is Bifunctional glutamine synthetase adenylyltransferase/adenylyl-removing enzyme (946 aa).

Residues 1-440 (MKPLSSPLQQ…VFNELIGDDE (440 aa)) are adenylyl removase. The adenylyl transferase stretch occupies residues 449–946 (SEQWRELWQD…ASWQKWLVEE (498 aa)).

Belongs to the GlnE family. Requires Mg(2+) as cofactor.

It carries out the reaction [glutamine synthetase]-O(4)-(5'-adenylyl)-L-tyrosine + phosphate = [glutamine synthetase]-L-tyrosine + ADP. It catalyses the reaction [glutamine synthetase]-L-tyrosine + ATP = [glutamine synthetase]-O(4)-(5'-adenylyl)-L-tyrosine + diphosphate. In terms of biological role, involved in the regulation of glutamine synthetase GlnA, a key enzyme in the process to assimilate ammonia. When cellular nitrogen levels are high, the C-terminal adenylyl transferase (AT) inactivates GlnA by covalent transfer of an adenylyl group from ATP to specific tyrosine residue of GlnA, thus reducing its activity. Conversely, when nitrogen levels are low, the N-terminal adenylyl removase (AR) activates GlnA by removing the adenylyl group by phosphorolysis, increasing its activity. The regulatory region of GlnE binds the signal transduction protein PII (GlnB) which indicates the nitrogen status of the cell. The protein is Bifunctional glutamine synthetase adenylyltransferase/adenylyl-removing enzyme of Escherichia coli O45:K1 (strain S88 / ExPEC).